We begin with the raw amino-acid sequence, 130 residues long: Small ribosomal subunit protein uS8 (130 aa).

Belongs to the universal ribosomal protein uS8 family. Part of the 30S ribosomal subunit. Contacts proteins S5 and S12.

In terms of biological role, one of the primary rRNA binding proteins, it binds directly to 16S rRNA central domain where it helps coordinate assembly of the platform of the 30S subunit. The protein is Small ribosomal subunit protein uS8 of Pseudomonas fluorescens (strain ATCC BAA-477 / NRRL B-23932 / Pf-5).